Consider the following 398-residue polypeptide: Dual specificity mitogen-activated protein kinase kinase 2 (398 aa).

The tract at residues 1-29 is disordered; the sequence is MPAKRKPVLPALTITPSPAEGPGPGGSAE. One can recognise a Protein kinase domain in the interval 70 to 367; it reads FERISELGAG…LKMLMNHTFI (298 aa). Residues 76–84 and K99 each bind ATP; that span reads LGAGNGGVV. The active-site Proton acceptor is D192. Phosphoserine; by RAF occurs at positions 220 and 224.

This sequence belongs to the protein kinase superfamily. STE Ser/Thr protein kinase family. MAP kinase kinase subfamily. Post-translationally, activated by phosphorylation on Ser/Thr catalyzed by MAP kinase kinase kinases (RAF).

The enzyme catalyses L-seryl-[protein] + ATP = O-phospho-L-seryl-[protein] + ADP + H(+). It carries out the reaction L-threonyl-[protein] + ATP = O-phospho-L-threonyl-[protein] + ADP + H(+). The catalysed reaction is L-tyrosyl-[protein] + ATP = O-phospho-L-tyrosyl-[protein] + ADP + H(+). Its function is as follows. Catalyzes the concomitant phosphorylation of a threonine and a tyrosine residue in a Thr-Glu-Tyr sequence located in MAP kinases. Activates the ERK1 and ERK2 MAP kinases. This chain is Dual specificity mitogen-activated protein kinase kinase 2 (MAP2K2), found in Gallus gallus (Chicken).